A 298-amino-acid polypeptide reads, in one-letter code: Syntaxin-125 (298 aa).

Met1 is modified (N-acetylmethionine). The Cytoplasmic segment spans residues 1 to 274 (MNDLFSNSFK…KSSRKWTCYA (274 aa)). A coiled-coil region spans residues 25–155 (TMNLDKFFED…NEYKETVERR (131 aa)). Residues 198–260 (ISEIQERHDA…RRGTDQLQDA (63 aa)) form the t-SNARE coiled-coil homology domain. Residues 275 to 295 (IILFIVIFILLLIPLLPHIML) traverse the membrane as a helical; Anchor for type IV membrane protein segment. At 296 to 298 (MLK) the chain is on the vesicular side.

The protein belongs to the syntaxin family. Part of the t-SNARE complex.

It localises to the membrane. Functionally, vesicle trafficking protein that functions in the secretory pathway. In Arabidopsis thaliana (Mouse-ear cress), this protein is Syntaxin-125 (SYP125).